The primary structure comprises 347 residues: tRNA N6-adenosine threonylcarbamoyltransferase (347 aa).

Positions 109 and 113 each coordinate Fe cation. Residues 136-140 (TVSGG), Asp169, Gly182, Asp186, and Asn284 contribute to the substrate site. Fe cation is bound at residue Asp312.

It belongs to the KAE1 / TsaD family. The cofactor is Fe(2+).

It is found in the cytoplasm. The enzyme catalyses L-threonylcarbamoyladenylate + adenosine(37) in tRNA = N(6)-L-threonylcarbamoyladenosine(37) in tRNA + AMP + H(+). Its function is as follows. Required for the formation of a threonylcarbamoyl group on adenosine at position 37 (t(6)A37) in tRNAs that read codons beginning with adenine. Is involved in the transfer of the threonylcarbamoyl moiety of threonylcarbamoyl-AMP (TC-AMP) to the N6 group of A37, together with TsaE and TsaB. TsaD likely plays a direct catalytic role in this reaction. This chain is tRNA N6-adenosine threonylcarbamoyltransferase, found in Chlorobium phaeobacteroides (strain BS1).